The chain runs to 227 residues: dTTP/UTP pyrophosphatase (227 aa).

Asp98 functions as the Proton acceptor in the catalytic mechanism.

It belongs to the Maf family. YhdE subfamily. The cofactor is a divalent metal cation.

The protein localises to the cytoplasm. It carries out the reaction dTTP + H2O = dTMP + diphosphate + H(+). It catalyses the reaction UTP + H2O = UMP + diphosphate + H(+). Its function is as follows. Nucleoside triphosphate pyrophosphatase that hydrolyzes dTTP and UTP. May have a dual role in cell division arrest and in preventing the incorporation of modified nucleotides into cellular nucleic acids. This chain is dTTP/UTP pyrophosphatase, found in Bartonella quintana (strain Toulouse) (Rochalimaea quintana).